Reading from the N-terminus, the 988-residue chain is Transposase for transposon Tn1546 (988 aa).

Belongs to the transposase 7 family.

Functionally, required for transposition of transposon Tn1546. The protein is Transposase for transposon Tn1546 of Enterococcus faecium (Streptococcus faecium).